Here is a 297-residue protein sequence, read N- to C-terminus: Cell division protein FtsQ (297 aa).

Topologically, residues 1 to 33 (MRPLSFRRRTAQARPDPAPSRLSYRVQRLLLTP) are cytoplasmic. The helical transmembrane segment at 34-54 (LFHALIRVGLPAFVLAFGVGW) threads the bilayer. Topologically, residues 55 to 297 (LLQNQELRDE…IRGLTNDRIE (243 aa)) are periplasmic. The region spanning 82-150 (FMVNAMSVSG…GILAIEIVER (69 aa)) is the POTRA domain.

It belongs to the FtsQ/DivIB family. FtsQ subfamily.

It localises to the cell inner membrane. Essential cell division protein. The protein is Cell division protein FtsQ of Dinoroseobacter shibae (strain DSM 16493 / NCIMB 14021 / DFL 12).